A 623-amino-acid chain; its full sequence is Heterogeneous nuclear ribonucleoprotein Q (623 aa).

N-acetylalanine is present on Ala-2. Ser-159 is modified (phosphoserine). 3 RRM domains span residues 162–241 (TEIF…ISVA), 243–325 (NRLF…WADP), and 338–408 (KVLF…FAKP). Lys-168 participates in a covalent cross-link: Glycyl lysine isopeptide (Lys-Gly) (interchain with G-Cter in SUMO2). Lys-221 is subject to N6-acetyllysine. Lys-363 carries the post-translational modification N6-acetyllysine. Tyr-373 is subject to Phosphotyrosine. The segment at 400–561 (NIEIVFAKPP…GARGGRGGNV (162 aa)) is interaction with APOBEC1. Arg-444 carries the asymmetric dimethylarginine; by PRMT1; alternate modification. Omega-N-methylarginine; by PRMT1; alternate is present on Arg-444. 6 tandem repeats follow at residues 448 to 450 (RGG), 451 to 453 (RGG), 460 to 464 (YYGYE), 469 to 472 (YYGY), 478 to 480 (RGG), and 485 to 488 (YYGY). The segment at 448-559 (RGGRGGYGYP…VRGARGGRGG (112 aa)) is 8 X 3 AA repeats of R-G-G. The 3 X 4 AA repeats of Y-Y-G-Y stretch occupies residues 460–488 (YYGYEDYYDYYGYDYHNYRGGYEDPYYGY). The residue at position 496 (Arg-496) is an Omega-N-methylarginine; by PRMT1. Positions 497-623 (GRGGRGARGA…YQDTFGQQWK (127 aa)) are disordered. One copy of the 1-4 repeat lies at 498 to 500 (RGG). The span at 504–522 (RGAAPSRGRGAAPPRGRAG) shows a compositional bias: low complexity. Arg-510 carries the asymmetric dimethylarginine; by PRMT1 modification. Asymmetric dimethylarginine; by PRMT1; alternate occurs at positions 518, 526, 536, and 539. 4 positions are modified to omega-N-methylarginine; by PRMT1; alternate: Arg-518, Arg-526, Arg-536, and Arg-539. The interaction with SMN stretch occupies residues 518 to 549 (RGRAGYSQRGGPGSARGVRGARGGAQQQRGRG). A 1-5 repeat occupies 526 to 528 (RGG). 3 tandem repeats follow at residues 539–541 (RGG), 554–556 (RGG), and 557–559 (RGG). A compositionally biased stretch (gly residues) spans 550–562 (VRGARGGRGGNVG). Residues 564–578 (KRKADGYNQPDSKRR) carry the Bipartite nuclear localization signal motif. Over residues 580-595 (TNNQNWGSQPIAQQPL) the composition is skewed to polar residues. Ser-587 is subject to Phosphoserine. Lys-607 participates in a covalent cross-link: Glycyl lysine isopeptide (Lys-Gly) (interchain with G-Cter in SUMO2). A compositionally biased stretch (polar residues) spans 611–623 (QEFYQDTFGQQWK).

As to quaternary structure, isoform 1 is a component of the APOB mRNA editosome complex and interacts with APOBEC1 and A1CF (APOBEC1 complementation factor). Part of a complex associated with the FOS mCRD domain and consisting of PABPC1, PAIP1, CSDE1/UNR, HNRPD and SYNCRIP. Isoform 3 interacts with HNRPR. Interacts with POLR2A hyperphosphorylated C-terminal domain. Isoform 1, isoform 2 and isoform 3 interact with SMN. Isoform 3 interacts through its C-terminal domain with SYT7, SYT8 and SYT9. The non-phosphorylated and phosphorylated forms are colocalized with PAIP1 in polysomes. Interacts with HABP4. Identified in a histone pre-mRNA complex, at least composed of ERI1, LSM11, SLBP, SNRPB, SYNCRIP and YBX1. Identified in the spliceosome C complex. Component of the coding region determinant (CRD)-mediated complex, composed of DHX9, HNRNPU, IGF2BP1, SYNCRIP and YBX1. Identified in a mRNP complex, at least composed of DHX9, DDX3X, ELAVL1, HNRNPU, IGF2BP1, ILF3, PABPC1, PCBP2, PTBP2, STAU1, STAU2, SYNCRIP and YBX1. Identified in a mRNP granule complex, at least composed of ACTB, ACTN4, DHX9, ERG, HNRNPA1, HNRNPA2B1, HNRNPAB, HNRNPD, HNRNPL, HNRNPR, HNRNPU, HSPA1, HSPA8, IGF2BP1, ILF2, ILF3, NCBP1, NCL, PABPC1, PABPC4, PABPN1, RPLP0, RPS3, RPS3A, RPS4X, RPS8, RPS9, SYNCRIP, YBX1 and untranslated mRNAs. Interacts with GTPBP1. Component of the GAIT complex; in humans the complex assembly seems to be a two-step process in which EPRS1 first associates with SYNCRIP to form a pre-GAIT complex which is deficient in GAIT element binding. In terms of assembly, (Microbial infection) Interacts with minute virus of mice (MVM) NS1 protein. (Microbial infection) Interacts with herpes virus 8/HHV-8 protein vIRF-1; this interaction induces ubiquitination and degradation of SYNCRIP. In terms of processing, phosphorylated on tyrosine. The membrane-bound form found in microsomes is phosphorylated in vitro by insulin receptor tyrosine kinase (INSR). Phosphorylation is inhibited upon binding to RNA, whereas the cytoplasmic form is poorly phosphorylated. Ubiquitously expressed. Detected in heart, brain, pancreas, placenta, spleen, lung, liver, skeletal muscle, kidney, thymus, prostate, uterus, small intestine, colon, peripheral blood and testis.

The protein localises to the cytoplasm. The protein resides in the microsome. It localises to the endoplasmic reticulum. It is found in the nucleus. Its subcellular location is the nucleoplasm. Its function is as follows. Heterogenous nuclear ribonucleoprotein (hnRNP) implicated in mRNA processing mechanisms. Component of the CRD-mediated complex that promotes MYC mRNA stability. Isoform 1, isoform 2 and isoform 3 are associated in vitro with pre-mRNA, splicing intermediates and mature mRNA protein complexes. Isoform 1 binds to apoB mRNA AU-rich sequences. Isoform 1 is part of the APOB mRNA editosome complex and may modulate the postranscriptional C to U RNA-editing of the APOB mRNA through either by binding to A1CF (APOBEC1 complementation factor), to APOBEC1 or to RNA itself. May be involved in translationally coupled mRNA turnover. Implicated with other RNA-binding proteins in the cytoplasmic deadenylation/translational and decay interplay of the FOS mRNA mediated by the major coding-region determinant of instability (mCRD) domain. Interacts in vitro preferentially with poly(A) and poly(U) RNA sequences. Isoform 3 may be involved in cytoplasmic vesicle-based mRNA transport through interaction with synaptotagmins. Component of the GAIT (gamma interferon-activated inhibitor of translation) complex which mediates interferon-gamma-induced transcript-selective translation inhibition in inflammation processes. Upon interferon-gamma activation assembles into the GAIT complex which binds to stem loop-containing GAIT elements in the 3'-UTR of diverse inflammatory mRNAs (such as ceruplasmin) and suppresses their translation; seems not to be essential for GAIT complex function. The protein is Heterogeneous nuclear ribonucleoprotein Q (SYNCRIP) of Homo sapiens (Human).